The sequence spans 445 residues: Argininosuccinate synthase (445 aa).

ATP is bound by residues 17–25 (AFSGGLDTS) and A43. Y99 is an L-citrulline binding site. The ATP site is built by G129 and T131. L-aspartate is bound by residues T131, N135, and D136. N135 serves as a coordination point for L-citrulline. D136 is a binding site for ATP. L-citrulline contacts are provided by R139 and S192. D194 serves as a coordination point for ATP. Residues T201, E203, and E280 each coordinate L-citrulline.

Belongs to the argininosuccinate synthase family. Type 2 subfamily. Homotetramer.

The protein resides in the cytoplasm. It catalyses the reaction L-citrulline + L-aspartate + ATP = 2-(N(omega)-L-arginino)succinate + AMP + diphosphate + H(+). Its pathway is amino-acid biosynthesis; L-arginine biosynthesis; L-arginine from L-ornithine and carbamoyl phosphate: step 2/3. This is Argininosuccinate synthase from Bordetella petrii (strain ATCC BAA-461 / DSM 12804 / CCUG 43448).